The primary structure comprises 376 residues: 23S rRNA (uracil(747)-C(5))-methyltransferase RlmC (376 aa).

[4Fe-4S] cluster-binding residues include Cys3, Cys11, Cys14, and Cys88. Positions 213, 242, 263, and 308 each coordinate S-adenosyl-L-methionine. Cys335 acts as the Nucleophile in catalysis.

Belongs to the class I-like SAM-binding methyltransferase superfamily. RNA M5U methyltransferase family. RlmC subfamily.

The catalysed reaction is uridine(747) in 23S rRNA + S-adenosyl-L-methionine = 5-methyluridine(747) in 23S rRNA + S-adenosyl-L-homocysteine + H(+). Catalyzes the formation of 5-methyl-uridine at position 747 (m5U747) in 23S rRNA. The protein is 23S rRNA (uracil(747)-C(5))-methyltransferase RlmC of Vibrio vulnificus (strain YJ016).